The following is a 211-amino-acid chain: Small ribosomal subunit protein uS3 (211 aa).

The KH type-2 domain maps to 38–106 (LRNFLKKRLY…EVYLNIQEVR (69 aa)).

The protein belongs to the universal ribosomal protein uS3 family. In terms of assembly, part of the 30S ribosomal subunit. Forms a tight complex with proteins S10 and S14.

Its function is as follows. Binds the lower part of the 30S subunit head. Binds mRNA in the 70S ribosome, positioning it for translation. This is Small ribosomal subunit protein uS3 from Geobacter sp. (strain M21).